Reading from the N-terminus, the 162-residue chain is uncharacterized protein (162 aa).

One can recognise an HTH asnC-type domain in the interval 6–71 (LDDLDRAILK…PIKPRKLALV (66 aa)). Residues 25 to 44 (IAEISNQLKKPESTVHFRIK) constitute a DNA-binding region (H-T-H motif).

This is an uncharacterized protein from Pyrococcus abyssi (strain GE5 / Orsay).